Reading from the N-terminus, the 234-residue chain is Carboxy-S-adenosyl-L-methionine synthase (234 aa).

S-adenosyl-L-methionine-binding positions include Tyr-35, 60-62, 109-110, Asn-124, and Arg-191; these read GCS and DI.

It belongs to the class I-like SAM-binding methyltransferase superfamily. Cx-SAM synthase family. As to quaternary structure, homodimer.

It catalyses the reaction prephenate + S-adenosyl-L-methionine = carboxy-S-adenosyl-L-methionine + 3-phenylpyruvate + H2O. Functionally, catalyzes the conversion of S-adenosyl-L-methionine (SAM) to carboxy-S-adenosyl-L-methionine (Cx-SAM). The sequence is that of Carboxy-S-adenosyl-L-methionine synthase from Campylobacter fetus subsp. fetus (strain 82-40).